Consider the following 282-residue polypeptide: Putative 4-diphosphocytidyl-2-C-methyl-D-erythritol kinase (282 aa).

Lys9 is a catalytic residue. 93–103 (PVSAGLAGGSA) contributes to the ATP binding site. Asp135 is an active-site residue.

This sequence belongs to the GHMP kinase family. IspE subfamily.

The catalysed reaction is 4-CDP-2-C-methyl-D-erythritol + ATP = 4-CDP-2-C-methyl-D-erythritol 2-phosphate + ADP + H(+). Catalyzes the phosphorylation of the position 2 hydroxy group of 4-diphosphocytidyl-2C-methyl-D-erythritol. The sequence is that of Putative 4-diphosphocytidyl-2-C-methyl-D-erythritol kinase from Staphylococcus aureus (strain bovine RF122 / ET3-1).